The primary structure comprises 233 residues: Phosphoribosylformylglycinamidine synthase subunit PurQ (233 aa).

Residues 3 to 233 (SAILVFPGIN…GLVEHLAKAA (231 aa)) form the Glutamine amidotransferase type-1 domain. C87 acts as the Nucleophile in catalysis. Catalysis depends on residues H204 and E206.

Part of the FGAM synthase complex composed of 1 PurL, 1 PurQ and 2 PurS subunits.

It is found in the cytoplasm. It catalyses the reaction N(2)-formyl-N(1)-(5-phospho-beta-D-ribosyl)glycinamide + L-glutamine + ATP + H2O = 2-formamido-N(1)-(5-O-phospho-beta-D-ribosyl)acetamidine + L-glutamate + ADP + phosphate + H(+). It carries out the reaction L-glutamine + H2O = L-glutamate + NH4(+). Its pathway is purine metabolism; IMP biosynthesis via de novo pathway; 5-amino-1-(5-phospho-D-ribosyl)imidazole from N(2)-formyl-N(1)-(5-phospho-D-ribosyl)glycinamide: step 1/2. Functionally, part of the phosphoribosylformylglycinamidine synthase complex involved in the purines biosynthetic pathway. Catalyzes the ATP-dependent conversion of formylglycinamide ribonucleotide (FGAR) and glutamine to yield formylglycinamidine ribonucleotide (FGAM) and glutamate. The FGAM synthase complex is composed of three subunits. PurQ produces an ammonia molecule by converting glutamine to glutamate. PurL transfers the ammonia molecule to FGAR to form FGAM in an ATP-dependent manner. PurS interacts with PurQ and PurL and is thought to assist in the transfer of the ammonia molecule from PurQ to PurL. This Rhodopseudomonas palustris (strain BisB18) protein is Phosphoribosylformylglycinamidine synthase subunit PurQ.